The sequence spans 513 residues: GMP synthase [glutamine-hydrolyzing] (513 aa).

A Glutamine amidotransferase type-1 domain is found at 9–198 (MILVLDFGSQ…VRRICDCTGE (190 aa)). The active-site Nucleophile is Cys86. Catalysis depends on residues His172 and Glu174. One can recognise a GMPS ATP-PPase domain in the interval 199–388 (WTMENFIDLE…LGIPEHLVWR (190 aa)). 226-232 (SGGVDSS) contributes to the ATP binding site.

Homodimer.

It carries out the reaction XMP + L-glutamine + ATP + H2O = GMP + L-glutamate + AMP + diphosphate + 2 H(+). The protein operates within purine metabolism; GMP biosynthesis; GMP from XMP (L-Gln route): step 1/1. In terms of biological role, catalyzes the synthesis of GMP from XMP. In Staphylococcus carnosus (strain TM300), this protein is GMP synthase [glutamine-hydrolyzing].